Consider the following 271-residue polypeptide: Cytosolic Fe-S cluster assembly factor NUBP2 (271 aa).

Position 1 is an N-acetylmethionine (Met1). Gly22 to Ser29 contacts ATP. [4Fe-4S] cluster-binding residues include Cys196 and Cys199.

Belongs to the Mrp/NBP35 ATP-binding proteins family. NUBP2/CFD1 subfamily. As to quaternary structure, heterotetramer of 2 NUBP1 and 2 NUBP2 chains. Interacts with KIFC1. Interacts with NUBP1. [4Fe-4S] cluster serves as cofactor.

Its subcellular location is the nucleus. It localises to the cytoplasm. It is found in the cytoskeleton. The protein localises to the microtubule organizing center. The protein resides in the centrosome. Its subcellular location is the cilium axoneme. It localises to the centriole. Component of the cytosolic iron-sulfur (Fe/S) protein assembly (CIA) machinery. Required for maturation of extramitochondrial Fe-S proteins. The NUBP1-NUBP2 heterotetramer forms a Fe-S scaffold complex, mediating the de novo assembly of an Fe-S cluster and its transfer to target apoproteins. Negatively regulates cilium formation and structure. This is Cytosolic Fe-S cluster assembly factor NUBP2 from Bos taurus (Bovine).